Here is a 250-residue protein sequence, read N- to C-terminus: Ribosomal RNA small subunit methyltransferase J (250 aa).

Residues 101–102 (RD), 117–118 (ER), 153–154 (SS), and aspartate 171 contribute to the S-adenosyl-L-methionine site.

The protein belongs to the methyltransferase superfamily. RsmJ family.

The protein resides in the cytoplasm. It carries out the reaction guanosine(1516) in 16S rRNA + S-adenosyl-L-methionine = N(2)-methylguanosine(1516) in 16S rRNA + S-adenosyl-L-homocysteine + H(+). Specifically methylates the guanosine in position 1516 of 16S rRNA. In Erwinia tasmaniensis (strain DSM 17950 / CFBP 7177 / CIP 109463 / NCPPB 4357 / Et1/99), this protein is Ribosomal RNA small subunit methyltransferase J.